The following is a 239-amino-acid chain: Ribonuclease 3 (239 aa).

The RNase III domain maps to 12 to 137 (RLTLEAAIGH…LIAALYLDGG (126 aa)). Glu50 is a binding site for Mg(2+). Asp54 is a catalytic residue. The Mg(2+) site is built by Asp123 and Glu126. Residue Glu126 is part of the active site. The DRBM domain maps to 162 to 231 (DAKTELQEWA…ATRILEREGI (70 aa)).

Belongs to the ribonuclease III family. Homodimer. Requires Mg(2+) as cofactor.

It is found in the cytoplasm. It catalyses the reaction Endonucleolytic cleavage to 5'-phosphomonoester.. In terms of biological role, digests double-stranded RNA. Involved in the processing of primary rRNA transcript to yield the immediate precursors to the large and small rRNAs (23S and 16S). Processes some mRNAs, and tRNAs when they are encoded in the rRNA operon. Processes pre-crRNA and tracrRNA of type II CRISPR loci if present in the organism. This Rhizobium rhizogenes (strain K84 / ATCC BAA-868) (Agrobacterium radiobacter) protein is Ribonuclease 3.